The primary structure comprises 166 residues: FMN reductase (NADH) RutF (166 aa).

Belongs to the non-flavoprotein flavin reductase family. RutF subfamily.

The catalysed reaction is FMNH2 + NAD(+) = FMN + NADH + 2 H(+). In terms of biological role, catalyzes the reduction of FMN to FMNH2 which is used to reduce pyrimidine by RutA via the Rut pathway. The chain is FMN reductase (NADH) RutF from Cronobacter sakazakii (strain ATCC BAA-894) (Enterobacter sakazakii).